Reading from the N-terminus, the 107-residue chain is Iron-sulfur cluster assembly protein CyaY (107 aa).

This sequence belongs to the frataxin family.

Functionally, involved in iron-sulfur (Fe-S) cluster assembly. May act as a regulator of Fe-S biogenesis. In Edwardsiella ictaluri (strain 93-146), this protein is Iron-sulfur cluster assembly protein CyaY.